The chain runs to 210 residues: uncharacterized protein (210 aa).

Helical transmembrane passes span 9–29, 35–55, 64–84, 91–111, 149–169, and 190–210; these read WVVT…IIAK, LIVN…MAWP, GPAV…VVAV, GLYG…AAMN, IWFS…AVFW, and IGQA…LFPV.

Its subcellular location is the cell membrane. This is an uncharacterized protein from Mycobacterium bovis (strain ATCC BAA-935 / AF2122/97).